The sequence spans 213 residues: Urease accessory protein UreG (213 aa).

Residue 12-19 (GPVGSGKT) coordinates GTP.

This sequence belongs to the SIMIBI class G3E GTPase family. UreG subfamily. Homodimer. UreD, UreF and UreG form a complex that acts as a GTP-hydrolysis-dependent molecular chaperone, activating the urease apoprotein by helping to assemble the nickel containing metallocenter of UreC. The UreE protein probably delivers the nickel.

It is found in the cytoplasm. Facilitates the functional incorporation of the urease nickel metallocenter. This process requires GTP hydrolysis, probably effectuated by UreG. This chain is Urease accessory protein UreG, found in Marinomonas sp. (strain MWYL1).